A 146-amino-acid polypeptide reads, in one-letter code: Hemoglobin subunit beta-A/B (146 aa).

Residue G1 is modified to N-acetylserine; in variant beta-B. Positions 2–146 (FLTAEEKGLV…VANALAHKYH (145 aa)) constitute a Globin domain. S44 carries the post-translational modification Phosphoserine. Residue K59 is modified to N6-acetyllysine. Residue H63 participates in heme b binding. K82 bears the N6-acetyllysine mark. H92 provides a ligand contact to heme b. An S-nitrosocysteine modification is found at C93. K144 bears the N6-acetyllysine mark.

This sequence belongs to the globin family. Heterotetramer of two alpha chains and two beta chains. Red blood cells.

In terms of biological role, involved in oxygen transport from the lung to the various peripheral tissues. The protein is Hemoglobin subunit beta-A/B (HBB) of Felis catus (Cat).